The primary structure comprises 226 residues: Urease accessory protein UreF (226 aa).

This sequence belongs to the UreF family. In terms of assembly, ureD, UreF and UreG form a complex that acts as a GTP-hydrolysis-dependent molecular chaperone, activating the urease apoprotein by helping to assemble the nickel containing metallocenter of UreC. The UreE protein probably delivers the nickel.

The protein resides in the cytoplasm. Its function is as follows. Required for maturation of urease via the functional incorporation of the urease nickel metallocenter. The sequence is that of Urease accessory protein UreF from Burkholderia ambifaria (strain MC40-6).